A 1010-amino-acid chain; its full sequence is Lysosomal alpha-mannosidase (1010 aa).

Positions 1-22 (MVIKKLFILIFCLFLIINEING) are cleaved as a signal peptide. A propeptide spans 23–40 (KKTKINDIKKSKPKLSST) (pro I). Zn(2+) contacts are provided by His-51 and Asp-53. The N-linked (GlcNAc...) asparagine glycan is linked to Asn-68. 2 residues coordinate Zn(2+): Asp-173 and His-420. Asp-173 serves as the catalytic Nucleophile. N-linked (GlcNAc...) asparagine glycosylation is found at Asn-480, Asn-520, Asn-528, Asn-539, Asn-623, Asn-760, Asn-784, Asn-828, Asn-954, and Asn-963. Residues 508 to 595 (RNEPVRIPIP…GGGKINEKVS (88 aa)) constitute a propeptide, pro II.

It belongs to the glycosyl hydrolase 38 family. In terms of assembly, tetramer of equimolar amounts of 60 and 58 kDa subunits. The cofactor is Zn(2+). First cleaved into the mature 58 kDa subunit and an intermediate 82 kDa subunit. The latter is then cleaved to its mature 60 kDa subunit form. These events occur in multiple intracellular compartments. The 60 kDa subunit may form one or more intramolecular disulfide bonds.

The protein localises to the lysosome. It catalyses the reaction Hydrolysis of terminal, non-reducing alpha-D-mannose residues in alpha-D-mannosides.. The sequence is that of Lysosomal alpha-mannosidase (manA) from Dictyostelium discoideum (Social amoeba).